The chain runs to 144 residues: Histone H3.1 (144 aa).

Residues 1–45 (MARTKQSARKTTGGKAPRKQLSAKSARKGVSPASSAGAKKSRYRP) form a disordered region. Residue K5 is modified to N6,N6,N6-trimethyllysine; alternate. K5 is modified (N6,N6-dimethyllysine; alternate). An N6-methyllysine; alternate mark is found at K5 and K10. An N6-acetyllysine; alternate mark is found at K10, K15, K19, K24, K28, and K39. At K15 the chain carries N6,N6-dimethyllysine; alternate. K19, K24, K28, and K39 each carry N6-methyllysine; alternate. An N6,N6,N6-trimethyllysine; alternate mark is found at K28 and K39. N6,N6-dimethyllysine; alternate occurs at positions 28 and 39. K58 bears the N6-acetyllysine mark.

The protein belongs to the histone H3 family. As to quaternary structure, the nucleosome is a histone octamer containing two molecules each of H2A, H2B, H3 and H4 assembled in one H3-H4 heterotetramer and two H2A-H2B heterodimers. The octamer wraps approximately 147 bp of DNA. Mono-, di- and trimethylated to form H3K4me1/2/3. H3K4me activates gene expression by regulating transcription elongation and plays a role in telomere length maintenance. H3K4me enrichment correlates with transcription levels, and occurs in a 5' to 3' gradient with H3K4me3 enrichment at the 5'-end of genes, shifting to H3K4me2 and then H3K4me1. H3K36me represses gene expression. In terms of processing, acetylation of histone H3 leads to transcriptional activation.

The protein resides in the nucleus. Its subcellular location is the chromosome. Functionally, core component of nucleosome. Nucleosomes wrap and compact DNA into chromatin, limiting DNA accessibility to the cellular machineries which require DNA as a template. Histones thereby play a central role in transcription regulation, DNA repair, DNA replication and chromosomal stability. DNA accessibility is regulated via a complex set of post-translational modifications of histones, also called histone code, and nucleosome remodeling. In Encephalitozoon cuniculi (strain GB-M1) (Microsporidian parasite), this protein is Histone H3.1 (HHT1).